The primary structure comprises 756 residues: Polyribonucleotide nucleotidyltransferase (756 aa).

Asp547 and Asp553 together coordinate Mg(2+). The KH domain maps to 613 to 672; it reads PRITSVTIPVNKIGELIGPKGKTINAITEETGADVSIEEDGTVYISAATGEAADAAIDRV. The S1 motif domain occupies 684-753; sequence GERFLGTVVK…NRGKISLVPV (70 aa).

The protein belongs to the polyribonucleotide nucleotidyltransferase family. Mg(2+) is required as a cofactor.

It is found in the cytoplasm. The catalysed reaction is RNA(n+1) + phosphate = RNA(n) + a ribonucleoside 5'-diphosphate. Functionally, involved in mRNA degradation. Catalyzes the phosphorolysis of single-stranded polyribonucleotides processively in the 3'- to 5'-direction. This Corynebacterium aurimucosum (strain ATCC 700975 / DSM 44827 / CIP 107346 / CN-1) (Corynebacterium nigricans) protein is Polyribonucleotide nucleotidyltransferase.